Here is a 145-residue protein sequence, read N- to C-terminus: Sporulation-specific cell division protein Francci3_3418 (145 aa).

Belongs to the SsgA family.

The protein resides in the cell septum. In terms of biological role, involved in sporulation-specific cell division. This Frankia casuarinae (strain DSM 45818 / CECT 9043 / HFP020203 / CcI3) protein is Sporulation-specific cell division protein Francci3_3418.